A 250-amino-acid polypeptide reads, in one-letter code: Uracil-DNA glycosylase (250 aa).

Asp91 functions as the Proton acceptor in the catalytic mechanism.

It belongs to the uracil-DNA glycosylase (UDG) superfamily. UNG family.

It is found in the host nucleus. The catalysed reaction is Hydrolyzes single-stranded DNA or mismatched double-stranded DNA and polynucleotides, releasing free uracil.. Excises uracil residues from the DNA which can arise as a result of misincorporation of dUMP residues by DNA polymerase or due to deamination of cytosine. In terms of biological role, excises uracil residues from the DNA which can arise as a result of misincorporation of dUMP residues by DNA polymerase or deamination of cytosines. Therefore may reduce deleterious uracil incorporation into the viral genome, particularly in terminally differentiated cells which lack DNA repair enzymes. The polypeptide is Uracil-DNA glycosylase (UL114) (Homo sapiens (Human)).